We begin with the raw amino-acid sequence, 780 residues long: Gelsolin (780 aa).

The first 25 residues, 1 to 25 (MAPYCSSLRSALLVLALCALSPSHA), serve as a signal peptide directing secretion. The segment at 28–48 (ASRGRAQERAPQSRVSETRPS) is disordered. An actin-severing region spans residues 51-174 (VVEHPEFLKA…YKKGGVASGF (124 aa)). Residues 74–155 (FDLVPVPPNL…EVQGFESSTF (82 aa)) form a Gelsolin-like 1 repeat. Tyr84 is modified (phosphotyrosine). Residues Gly90, Asp91, Glu122, Asp134, Gly139, and Ala141 each coordinate Ca(2+). The interval 121–124 (DESG) is actin-actin interfilament contact point. An a 1,2-diacyl-sn-glycero-3-phospho-(1D-myo-inositol-4,5-bisphosphate)-binding site is contributed by 160–167 (KSGLKYKK). Residue Val170 coordinates Ca(2+). 186–194 (RLFQVKGRR) contributes to the a 1,2-diacyl-sn-glycero-3-phospho-(1D-myo-inositol-4,5-bisphosphate) binding site. One copy of the Gelsolin-like 2 repeat lies at 196-268 (VRATEVPVSW…SEEGSEPEAM (73 aa)). Gly211 and Asp212 together coordinate Ca(2+). Cys213 and Cys226 are disulfide-bonded. The Ca(2+) site is built by Glu234, Asp284, Glu327, Asp328, and Glu352. A disordered region spans residues 244 to 286 (GIRDNERSGRAQVHVSEEGSEPEAMLQVLGPKPDLPQGTEDTA). Residues 315–387 (DENPFAQSAL…LPEGGETPLF (73 aa)) form a Gelsolin-like 3 repeat. Phosphotyrosine is present on residues Tyr407 and Tyr463. Residues 432–780 (AAQHGMDDDG…LDRALAELAA (349 aa)) are actin-binding, Ca-sensitive. The stretch at 453–534 (SNKVLVDPAT…VQGKEPAHLM (82 aa)) is one Gelsolin-like 4 repeat. 7 residues coordinate Ca(2+): Gly469, Asp470, Glu500, Asp512, Gly517, Pro519, and Thr549. The Gelsolin-like 5 repeat unit spans residues 576 to 640 (AVEVMPKAGA…EEGSEPDGFW (65 aa)). Position 582 is an N6-acetyllysine (Lys582). Ca(2+) is bound by residues Asn589 and Asp590. Tyr601 is modified (phosphotyrosine). A Ca(2+)-binding site is contributed by Glu612. The residue at position 649 (Tyr649) is a Phosphotyrosine. One copy of the Gelsolin-like 6 repeat lies at 679 to 754 (IEEVPGELMQ…VRQGFEPPSF (76 aa)). 3 residues coordinate Ca(2+): Asp694, Asp695, and Glu717. Thr740 bears the Phosphothreonine mark.

The protein belongs to the villin/gelsolin family. In terms of assembly, binds to actin and to fibronectin. Identified in a complex composed of ACTA1, COBL, GSN and TMSB4X. Interacts with the inactive form of EIF2AK2/PKR. Interacts with FLII. In terms of processing, phosphorylated on tyrosine residues in vitro.

The protein resides in the secreted. Its subcellular location is the cytoplasm. The protein localises to the cytoskeleton. Its function is as follows. Calcium-regulated, actin-modulating protein that binds to the plus (or barbed) ends of actin monomers or filaments, preventing monomer exchange (end-blocking or capping). It can promote the assembly of monomers into filaments (nucleation) as well as sever filaments already formed. Plays a role in ciliogenesis. In Rattus norvegicus (Rat), this protein is Gelsolin (Gsn).